Reading from the N-terminus, the 290-residue chain is Eukaryotic translation initiation factor 3 subunit G (290 aa).

Residues 1–34 (MSRLGNRAADWADDEEFDDPSALPAQQVTTNKDG) form a disordered region. The RRM domain occupies 210–288 (ATLRVTNVSE…LILRVEFAKR (79 aa)).

Belongs to the eIF-3 subunit G family. Component of the eukaryotic translation initiation factor 3 (eIF-3) complex.

It localises to the cytoplasm. In terms of biological role, RNA-binding component of the eukaryotic translation initiation factor 3 (eIF-3) complex, which is involved in protein synthesis of a specialized repertoire of mRNAs and, together with other initiation factors, stimulates binding of mRNA and methionyl-tRNAi to the 40S ribosome. The eIF-3 complex specifically targets and initiates translation of a subset of mRNAs involved in cell proliferation. This subunit can bind 18S rRNA. This Aspergillus fumigatus (strain CBS 144.89 / FGSC A1163 / CEA10) (Neosartorya fumigata) protein is Eukaryotic translation initiation factor 3 subunit G (tif35).